A 38-amino-acid polypeptide reads, in one-letter code: Large ribosomal subunit protein bL36 (38 aa).

This sequence belongs to the bacterial ribosomal protein bL36 family.

The chain is Large ribosomal subunit protein bL36 from Chloroflexus aurantiacus (strain ATCC 29366 / DSM 635 / J-10-fl).